Consider the following 305-residue polypeptide: Tyrosine recombinase XerC (305 aa).

The Core-binding (CB) domain maps to 1–93 (MVLDGFAAHF…SWRQYCVWLV (93 aa)). Residues 114–294 (RVPKALPQEW…DFDHIARLYD (181 aa)) enclose the Tyr recombinase domain. Active-site residues include Arg-155, Lys-179, His-246, Arg-249, and His-272. Catalysis depends on Tyr-281, which acts as the O-(3'-phospho-DNA)-tyrosine intermediate.

It belongs to the 'phage' integrase family. XerC subfamily. In terms of assembly, forms a cyclic heterotetrameric complex composed of two molecules of XerC and two molecules of XerD.

Its subcellular location is the cytoplasm. Functionally, site-specific tyrosine recombinase, which acts by catalyzing the cutting and rejoining of the recombining DNA molecules. The XerC-XerD complex is essential to convert dimers of the bacterial chromosome into monomers to permit their segregation at cell division. It also contributes to the segregational stability of plasmids. In Neisseria meningitidis serogroup C (strain 053442), this protein is Tyrosine recombinase XerC.